The primary structure comprises 254 residues: D-aminoacyl-tRNA deacylase (254 aa).

This sequence belongs to the DtdA deacylase family. Monomer. It depends on Zn(2+) as a cofactor.

It carries out the reaction a D-aminoacyl-tRNA + H2O = a tRNA + a D-alpha-amino acid + H(+). The enzyme catalyses glycyl-tRNA(Ala) + H2O = tRNA(Ala) + glycine + H(+). Functionally, D-aminoacyl-tRNA deacylase with broad substrate specificity. By recycling D-aminoacyl-tRNA to D-amino acids and free tRNA molecules, this enzyme counteracts the toxicity associated with the formation of D-aminoacyl-tRNA entities in vivo. This is D-aminoacyl-tRNA deacylase from Methanococcus vannielii (strain ATCC 35089 / DSM 1224 / JCM 13029 / OCM 148 / SB).